The primary structure comprises 552 residues: Eukaryotic translation initiation factor 3 subunit D (552 aa).

The tract at residues 288–302 (DFDLLTVSETANEPP) is RNA gate. A disordered region spans residues 525 to 552 (LPDGTFSSDEDEEEDDEDEEDEEEDEDN). Acidic residues predominate over residues 532–552 (SDEDEEEDDEDEEDEEEDEDN).

This sequence belongs to the eIF-3 subunit D family. As to quaternary structure, component of the eukaryotic translation initiation factor 3 (eIF-3) complex, which is composed of 13 subunits: eif3a, eif3b, eif3c, eif3d, eif3e, eif3f, eif3g, eif3h, eif3i, eif3j, eif3k, eif3l and eif3m.

It localises to the cytoplasm. Functionally, mRNA cap-binding component of the eukaryotic translation initiation factor 3 (eIF-3) complex, which is involved in protein synthesis of a specialized repertoire of mRNAs and, together with other initiation factors, stimulates binding of mRNA and methionyl-tRNAi to the 40S ribosome. The eIF-3 complex specifically targets and initiates translation of a subset of mRNAs involved in cell proliferation. In the eIF-3 complex, eif3d specifically recognizes and binds the 7-methylguanosine cap of a subset of mRNAs. This Danio rerio (Zebrafish) protein is Eukaryotic translation initiation factor 3 subunit D (eif3d).